The sequence spans 72 residues: Teretoxin Tsu11.2 (72 aa).

Residues 1 to 21 (MMAKATMAFCFLLMLTTVMLP) form the signal peptide. Positions 22 to 30 (TEGKTIAGR) are excised as a propeptide.

The protein belongs to the teretoxin H (TH) superfamily. Contains 4 disulfide bonds. As to expression, expressed by the venom duct.

Its subcellular location is the secreted. In Terebra subulata (Chocolate spotted auger), this protein is Teretoxin Tsu11.2.